We begin with the raw amino-acid sequence, 174 residues long: Repair DNA polymerase X (174 aa).

The segment at Arg-42–Asp-51 is involved in ssDNA binding. Residues Asp-49 and Asp-51 each coordinate Mg(2+). Cys-81 and Cys-86 are joined by a disulfide. Asp-100 is a binding site for Mg(2+).

It belongs to the DNA polymerase type-X family. Mg(2+) serves as cofactor.

Its subcellular location is the virion. The enzyme catalyses DNA(n) + a 2'-deoxyribonucleoside 5'-triphosphate = DNA(n+1) + diphosphate. Functionally, error-prone polymerase lacking a proofreading 3'-5' exonuclease which catalyzes the gap-filling reaction during the DNA repair process. Specifically binds intermediates in the single-nucleotide base-excision repair process. Also catalyzes DNA polymerization with low nucleotide-insertion fidelity. Probably acts as a strategic DNA mutase, which gives rise to a rapid emergence of variants. Generates mismatched G-G pairs, in that case, the polymerase first binds the deoxynucleotide followed by mismatch formation. Together with the viral DNA ligase, fills the single nucleotide gaps generated by the AP endonuclease. Binds DNA with high affinity via the helix alphaE. This is Repair DNA polymerase X from African swine fever virus (isolate Tick/South Africa/Pretoriuskop Pr4/1996) (ASFV).